The sequence spans 176 residues: MTFNRRNDRNVERETSEFEEKMLFVNRTSKTYQGGRRFRFAALVILGDRNGRVGMGIGKAKEVPVAIEKAKSIARKNMISVPVENGTIPHEIVGVNSTSRVLLKPAGPGTGVIAGTVPRSIAELAGITNMLSKELGSRNKVNVAYAVFDGFKNLRTAKQVRALRGIEAAPVTGGAQ.

One can recognise an S5 DRBM domain in the interval 18–81 (FEEKMLFVNR…SIARKNMISV (64 aa)).

Belongs to the universal ribosomal protein uS5 family. In terms of assembly, part of the 30S ribosomal subunit. Contacts proteins S4 and S8.

Its function is as follows. With S4 and S12 plays an important role in translational accuracy. Functionally, located at the back of the 30S subunit body where it stabilizes the conformation of the head with respect to the body. The polypeptide is Small ribosomal subunit protein uS5 (Deinococcus deserti (strain DSM 17065 / CIP 109153 / LMG 22923 / VCD115)).